The following is a 322-amino-acid chain: MTKNAPTASVITRLSPAKINLFLHITGKRADGYHNLQTVFRLLDWGDYLHFSVANKPMATIDSAVDNSAVDINSLCGQLLTLDGAEAITSSIEDNLIFKAARTLLAAAIDSSKLPEHLPKVLVTLDKHLPMGAGLGGGSSNAATTLLVLNEIWQLNFNQETLIKIGAKIGADVPIFIFGQDAIATGIGEQLTAIDLPDQQYLVLTPNAHVNTAKLFAHPKLPRDITLLSIETIKNQYDNYVQTLIAPYHNVFTPVVTSLAPAVDEGLRYLQGLEKIALGTARMTGSGSTVFLPLDASVTDDKLLLSKWIEEAPCTAYVVRSL.

K18 is a catalytic residue. 130 to 140 (PMGAGLGGGSS) is a binding site for ATP. The active site involves D172.

It belongs to the GHMP kinase family. IspE subfamily.

It carries out the reaction 4-CDP-2-C-methyl-D-erythritol + ATP = 4-CDP-2-C-methyl-D-erythritol 2-phosphate + ADP + H(+). It participates in isoprenoid biosynthesis; isopentenyl diphosphate biosynthesis via DXP pathway; isopentenyl diphosphate from 1-deoxy-D-xylulose 5-phosphate: step 3/6. Catalyzes the phosphorylation of the position 2 hydroxy group of 4-diphosphocytidyl-2C-methyl-D-erythritol. The polypeptide is 4-diphosphocytidyl-2-C-methyl-D-erythritol kinase (Psychrobacter arcticus (strain DSM 17307 / VKM B-2377 / 273-4)).